A 298-amino-acid chain; its full sequence is ATP synthase gamma chain (298 aa).

It belongs to the ATPase gamma chain family. F-type ATPases have 2 components, CF(1) - the catalytic core - and CF(0) - the membrane proton channel. CF(1) has five subunits: alpha(3), beta(3), gamma(1), delta(1), epsilon(1). CF(0) has three main subunits: a, b and c.

It localises to the cell membrane. Its function is as follows. Produces ATP from ADP in the presence of a proton gradient across the membrane. The gamma chain is believed to be important in regulating ATPase activity and the flow of protons through the CF(0) complex. The polypeptide is ATP synthase gamma chain (Mycobacterium leprae (strain Br4923)).